A 242-amino-acid polypeptide reads, in one-letter code: Transcriptional regulatory protein btr (242 aa).

Positions 158-231 constitute an HTH crp-type domain; sequence MRSEQRLAAF…QREVRLIDLP (74 aa). The segment at residues 191 to 210 is a DNA-binding region (H-T-H motif); it reads REEIGNYLGLTLETVSRLFS.

In terms of biological role, may regulate gene expression in response to changes in oxygen levels or to changes in the redox potential of the bacterial environment. This Bordetella pertussis (strain Tohama I / ATCC BAA-589 / NCTC 13251) protein is Transcriptional regulatory protein btr (btr).